The chain runs to 104 residues: Small ribosomal subunit protein uS10 (104 aa).

Belongs to the universal ribosomal protein uS10 family. As to quaternary structure, part of the 30S ribosomal subunit.

Its function is as follows. Involved in the binding of tRNA to the ribosomes. In Nitrosococcus oceani (strain ATCC 19707 / BCRC 17464 / JCM 30415 / NCIMB 11848 / C-107), this protein is Small ribosomal subunit protein uS10.